A 349-amino-acid chain; its full sequence is tRNA pseudouridine synthase D (349 aa).

Substrate is bound at residue phenylalanine 27. The active-site Nucleophile is aspartate 80. Asparagine 129 lines the substrate pocket. In terms of domain architecture, TRUD spans 155–303 (GVPNYFGAQR…VEAARRAMLL (149 aa)). Phenylalanine 329 contributes to the substrate binding site.

Belongs to the pseudouridine synthase TruD family.

The catalysed reaction is uridine(13) in tRNA = pseudouridine(13) in tRNA. In terms of biological role, responsible for synthesis of pseudouridine from uracil-13 in transfer RNAs. The protein is tRNA pseudouridine synthase D of Escherichia coli O6:H1 (strain CFT073 / ATCC 700928 / UPEC).